Here is a 475-residue protein sequence, read N- to C-terminus: MGEAPSPAPALWDWDYLDRCFARHRVCISFGLWICASSCWIAAHALLLYLRCAQKPRQDQSALCAACCLLTSLCDTVGALLARQLTIQVFTGAYLAAIDLVNFMFILFPVCGSKFKSNSDREARERKRRRQLRASVFALALPLSLGPCWALWVAVPKASATIRGPQRRLLASLLQENTEILGYLLGSVAAFGSWASRIPPLSRIAPPPTLGITTQHEIWRGQMSKPSQSPSRSPSGHWRAAAQRQVLGTEMCRGKTFPSIHLWTRLLSALAGLLYASAIVAHDQHPEYLLRATPWFLTSLGRAALDLAIIFLSCVMKSKMRQALGFAKEARESPDTQALLTCAEKEEENQENLDWVPLTTLSHCKSLRTMTAISRYMELTIEPVQQAGCSATRLPGDGQTSAGDASLQDPPSYPPVQVIRARVSSGSSSEVSSINSDLEWDPEDVNLEGSKENVELLGSQVHQDSVRTAHLSDDD.

Topologically, residues 1–29 (MGEAPSPAPALWDWDYLDRCFARHRVCIS) are extracellular. A helical membrane pass occupies residues 30–50 (FGLWICASSCWIAAHALLLYL). Residues 51-61 (RCAQKPRQDQS) are Cytoplasmic-facing. Residues 62–82 (ALCAACCLLTSLCDTVGALLA) form a helical membrane-spanning segment. The Extracellular portion of the chain corresponds to 83–88 (RQLTIQ). A helical membrane pass occupies residues 89–109 (VFTGAYLAAIDLVNFMFILFP). The Cytoplasmic segment spans residues 110–135 (VCGSKFKSNSDREARERKRRRQLRAS). Residues 136–156 (VFALALPLSLGPCWALWVAVP) form a helical membrane-spanning segment. Over 157 to 179 (KASATIRGPQRRLLASLLQENTE) the chain is Extracellular. The helical transmembrane segment at 180-200 (ILGYLLGSVAAFGSWASRIPP) threads the bilayer. The Cytoplasmic portion of the chain corresponds to 201–259 (LSRIAPPPTLGITTQHEIWRGQMSKPSQSPSRSPSGHWRAAAQRQVLGTEMCRGKTFPS). Residues 260-280 (IHLWTRLLSALAGLLYASAIV) form a helical membrane-spanning segment. Topologically, residues 281–294 (AHDQHPEYLLRATP) are extracellular. A helical transmembrane segment spans residues 295–315 (WFLTSLGRAALDLAIIFLSCV). Residues 316 to 475 (MKSKMRQALG…VRTAHLSDDD (160 aa)) lie on the Cytoplasmic side of the membrane. The interval 390–475 (SATRLPGDGQ…VRTAHLSDDD (86 aa)) is disordered. Over residues 424–436 (SSGSSSEVSSINS) the composition is skewed to low complexity. A compositionally biased stretch (basic and acidic residues) spans 464–475 (DSVRTAHLSDDD). At Ser465 the chain carries Phosphoserine.

The protein resides in the membrane. The protein is Transmembrane protein 44 (TMEM44) of Homo sapiens (Human).